Reading from the N-terminus, the 361-residue chain is Queuine tRNA-ribosyltransferase (361 aa).

The Proton acceptor role is filled by aspartate 92. Substrate contacts are provided by residues 92-96 (DSGGF), aspartate 146, glutamine 189, and glycine 216. The segment at 247–253 (GVGKPAD) is RNA binding. Aspartate 266 (nucleophile) is an active-site residue. The RNA binding; important for wobble base 34 recognition stretch occupies residues 271–275 (TRSGR). 4 residues coordinate Zn(2+): cysteine 304, cysteine 306, cysteine 309, and histidine 335.

Belongs to the queuine tRNA-ribosyltransferase family. In terms of assembly, homodimer. Within each dimer, one monomer is responsible for RNA recognition and catalysis, while the other monomer binds to the replacement base PreQ1. Zn(2+) is required as a cofactor.

The catalysed reaction is 7-aminomethyl-7-carbaguanine + guanosine(34) in tRNA = 7-aminomethyl-7-carbaguanosine(34) in tRNA + guanine. It participates in tRNA modification; tRNA-queuosine biosynthesis. In terms of biological role, catalyzes the base-exchange of a guanine (G) residue with the queuine precursor 7-aminomethyl-7-deazaguanine (PreQ1) at position 34 (anticodon wobble position) in tRNAs with GU(N) anticodons (tRNA-Asp, -Asn, -His and -Tyr). Catalysis occurs through a double-displacement mechanism. The nucleophile active site attacks the C1' of nucleotide 34 to detach the guanine base from the RNA, forming a covalent enzyme-RNA intermediate. The proton acceptor active site deprotonates the incoming PreQ1, allowing a nucleophilic attack on the C1' of the ribose to form the product. After dissociation, two additional enzymatic reactions on the tRNA convert PreQ1 to queuine (Q), resulting in the hypermodified nucleoside queuosine (7-(((4,5-cis-dihydroxy-2-cyclopenten-1-yl)amino)methyl)-7-deazaguanosine). The chain is Queuine tRNA-ribosyltransferase from Rickettsia canadensis (strain McKiel).